A 455-amino-acid polypeptide reads, in one-letter code: Probable glycine dehydrogenase (decarboxylating) subunit 1 (455 aa).

The protein belongs to the GcvP family. N-terminal subunit subfamily. The glycine cleavage system is composed of four proteins: P, T, L and H. In this organism, the P 'protein' is a heterodimer of two subunits.

It carries out the reaction N(6)-[(R)-lipoyl]-L-lysyl-[glycine-cleavage complex H protein] + glycine + H(+) = N(6)-[(R)-S(8)-aminomethyldihydrolipoyl]-L-lysyl-[glycine-cleavage complex H protein] + CO2. The glycine cleavage system catalyzes the degradation of glycine. The P protein binds the alpha-amino group of glycine through its pyridoxal phosphate cofactor; CO(2) is released and the remaining methylamine moiety is then transferred to the lipoamide cofactor of the H protein. The protein is Probable glycine dehydrogenase (decarboxylating) subunit 1 of Francisella tularensis subsp. holarctica (strain FTNF002-00 / FTA).